Reading from the N-terminus, the 161-residue chain is 6,7-dimethyl-8-ribityllumazine synthase (161 aa).

Residues Phe23, 61 to 63 (SFE), and 85 to 87 (AVI) each bind 5-amino-6-(D-ribitylamino)uracil. 90–91 (DT) lines the (2S)-2-hydroxy-3-oxobutyl phosphate pocket. His93 serves as the catalytic Proton donor. Phe118 serves as a coordination point for 5-amino-6-(D-ribitylamino)uracil. Position 132 (Arg132) interacts with (2S)-2-hydroxy-3-oxobutyl phosphate.

Belongs to the DMRL synthase family.

The catalysed reaction is (2S)-2-hydroxy-3-oxobutyl phosphate + 5-amino-6-(D-ribitylamino)uracil = 6,7-dimethyl-8-(1-D-ribityl)lumazine + phosphate + 2 H2O + H(+). It functions in the pathway cofactor biosynthesis; riboflavin biosynthesis; riboflavin from 2-hydroxy-3-oxobutyl phosphate and 5-amino-6-(D-ribitylamino)uracil: step 1/2. Its function is as follows. Catalyzes the formation of 6,7-dimethyl-8-ribityllumazine by condensation of 5-amino-6-(D-ribitylamino)uracil with 3,4-dihydroxy-2-butanone 4-phosphate. This is the penultimate step in the biosynthesis of riboflavin. The protein is 6,7-dimethyl-8-ribityllumazine synthase of Synechococcus sp. (strain WH7803).